We begin with the raw amino-acid sequence, 358 residues long: HLA class I histocompatibility antigen, alpha chain E (358 aa).

An N-terminal signal peptide occupies residues 1–21 (MVDGTLLLLLSEALALTQTWA). The segment at 22–111 (GSHSLKYFHT…LRGYYNQSEA (90 aa)) is alpha-1. Topologically, residues 22-305 (GSHSLKYFHT…KPASQPTIPI (284 aa)) are extracellular. The a peptide antigen site is built by Y28, E84, S87, N98, and Y105. Residue N107 is glycosylated (N-linked (GlcNAc...) asparagine). An alpha-2 region spans residues 112–203 (GSHTLQWMHG…EKGKETLLHL (92 aa)). A disulfide bond links C122 and C185. Positions 164, 167, 177, 180, and 192 each coordinate a peptide antigen. Residues 204 to 295 (EPPKTHVTHH…GLPEPVTLRW (92 aa)) are alpha-3. Residues 206–294 (PKTHVTHHPI…EGLPEPVTLR (89 aa)) form the Ig-like C1-type domain. C224 and C280 are oxidised to a cystine. Residues 296-305 (KPASQPTIPI) are connecting peptide. The helical transmembrane segment at 306–329 (VGIIAGLVLLGSVVSGAVVAAVIW) threads the bilayer. The Cytoplasmic portion of the chain corresponds to 330–358 (RKKSSGGKGGSYSKAEWSDSAQGSESHSL). The tract at residues 333-358 (SSGGKGGSYSKAEWSDSAQGSESHSL) is disordered. Residues 348 to 358 (DSAQGSESHSL) are compositionally biased toward polar residues. S353 is subject to Phosphoserine.

This sequence belongs to the MHC class I family. As to quaternary structure, forms a heterotrimer with B2M and a self- or a pathogen-derived peptide (peptide-bound HLA-E-B2M). Similarly to MHC class Ia assembly, HLA-E-B2M heterodimer interacts with components of the antigen processing machinery TAPBP and TAP1-TAP2 complex; this interaction is required for peptide loading and translocation to the cell surface. Interacts with CALCR; this interaction is required for appropriate folding. The optimum binding peptide is a nonamer (VL9) that is primarily derived from amino-acid residues 3-11 of the signal sequences of most HLA-A, -B, -C and -G molecules. The VL9 peptide anchors to five main sites in the peptide-binding groove of HLA-E. Peptide-bound HLA-E-B2M complex interacts with KLRD1-KLRC1 receptor on NK cells. Binds with lower affinity to activating KLRD1-KLRC2. The common subunit KLRC1 plays a prominent role in directly interacting with HLA-E. Peptide-bound HLA-E-B2M interacts with the alpha-beta TCR on unconventional CD8+ T cells. Peptide-free HLA-E interacts with HLA-F-B2M complex; this interaction may regulate the intracellular trafficking and the stability of peptide-free MHC class I open conformers (OCs). Post-translationally, N-glycosylated. In terms of processing, the soluble form (sHLA-E) can be partly produced by proteolytic cleavage at the cell surface (shedding) by a matrix metalloproteinase. Alternative splicing is also suggested as a mechanism for generation of sHLA-E, although it remains to be proved. In terms of tissue distribution, expressed in secretory endometrial cells during pregnancy (at protein level). The expression in nonlymphoid tissues is restricted to endothelial cells from all types of vessels, including arteries, veins, capillaries, and lymphatics (at protein level). In lymphoid organs, it is mainly expressed in endothelial venules, B and T cells, monocytes, macrophages, NK cells and megakaryocytes (at protein level).

It is found in the cell membrane. The protein resides in the golgi apparatus membrane. Its subcellular location is the secreted. Non-classical major histocompatibility class Ib molecule involved in immune self-nonself discrimination. In complex with B2M/beta-2-microglobulin binds nonamer self-peptides derived from the signal sequence of classical MHC class Ia molecules (VL9 peptides - VMAPRT[V/L][L/V/I/F]L). Peptide-bound HLA-E-B2M heterotrimeric complex primarily functions as a ligand for natural killer (NK) cell inhibitory receptor KLRD1-KLRC1, enabling NK cells to monitor the expression of other MHC class I molecules in healthy cells and to tolerate self. Upon cellular stress, preferentially binds signal sequence-derived peptides from stress-induced chaperones and is no longer recognized by NK cell inhibitory receptor KLRD1-KLRC1, resulting in impaired protection from NK cells. Binds signal sequence-derived peptides from non-classical MHC class Ib HLA-G molecules and acts as a ligand for NK cell activating receptor KLRD1-KLRC2, likely playing a role in the generation and effector functions of adaptive NK cells and in maternal-fetal tolerance during pregnancy. Besides self-peptides, can also bind and present pathogen-derived peptides conformationally similar to VL9 peptides to alpha-beta T cell receptor (TCR) on unconventional CD8-positive cytotoxic T cells, ultimately triggering antimicrobial immune response. Presents HIV gag peptides (immunodominant KAFSPEVIPMF and subdominant KALGPAATL epitopes) predominantly to CD8-positive T cell clones expressing a TRAV17-containing TCR, triggering HLA-E-restricted T cell responses. Presents mycobacterial peptides to HLA-E-restricted CD8-positive T cells eliciting both cytotoxic and immunoregulatory functions. Functionally, (Microbial infection) Viruses like human cytomegalovirus have evolved an escape mechanism whereby virus-induced down-regulation of host MHC class I molecules is coupled to the binding of viral peptides to HLA-E, restoring HLA-E expression and inducing HLA-E-dependent NK cell immune tolerance to infected cells. Its function is as follows. (Microbial infection) May bind HIV-1 gag/Capsid protein p24-derived peptide (AISPRTLNA) on infected cells and may inhibit NK cell cytotoxicity, a mechanism that allows HIV-1 to escape immune recognition. In terms of biological role, (Microbial infection) Upon SARS-CoV-2 infection, may contribute to functional exhaustion of cytotoxic NK cells and CD8-positive T cells. Binds SARS-CoV-2 S/Spike protein S1-derived peptide (LQPRTFLL) expressed on the surface of lung epithelial cells, inducing NK cell exhaustion and dampening of antiviral immune surveillance. This Homo sapiens (Human) protein is HLA class I histocompatibility antigen, alpha chain E.